The primary structure comprises 1513 residues: Mucin-2 (1513 aa).

A signal peptide spans 1-20 (MGLPLARLVAVCLVLALAKG). The VWFD 1 domain maps to 32–204 (HVCSTWGDFH…KINKPEVVCE (173 aa)). Disulfide bonds link Cys34/Cys166, Cys56/Cys203, Cys64/Cys163, Cys215/Cys252, Cys222/Cys247, Cys234/Cys272, Cys254/Cys260, Cys262/Cys288, Cys292/Cys326, Cys309/Cys348, Cys328/Cys342, Cys350/Cys372, Cys367/Cys384, Cys370/Cys379, Cys388/Cys525, Cys410/Cys560, Cys432/Cys440, Cys571/Cys616, Cys585/Cys611, Cys598/Cys636, Cys618/Cys624, Cys626/Cys651, Cys658/Cys695, Cys671/Cys685, Cys675/Cys715, Cys697/Cys709, Cys717/Cys739, and Cys737/Cys746. Asp46 is a binding site for Ca(2+). Residues Met143 and Met151 each coordinate Cu(+). Glu153 provides a ligand contact to Cu(2+). A glycan (N-linked (GlcNAc...) asparagine) is linked at Asn160. Residues Asp168, Asn170, and Glu177 each contribute to the Ca(2+) site. Cu(2+) is bound by residues His274 and His321. Positions 292 to 348 (CPGNMVYLESGSPWLDTCSHLEVSSLCEEHYMDGCFCPEGTVYDDITGSGCIPVSQC) constitute a TIL domain. Residue Met323 coordinates Cu(+). The VWFC domain occupies 350–410 (CKLHGHLYMP…GKKFTFHGDC (61 aa)). The VWFD 2 domain occupies 386-561 (ETCALEGGSH…NTWKAQSSCH (176 aa)). Ca(2+) is bound at residue Asp400. A glycan (N-linked (GlcNAc...) asparagine) is linked at Asn420. Asn527, Asn529, Leu531, Asp534, and Asp535 together coordinate Ca(2+). The N-linked (GlcNAc...) asparagine glycan is linked to Asn667. Asn767 carries N-linked (GlcNAc...) asparagine glycosylation. 21 cysteine pairs are disulfide-bonded: Cys781/Cys817, Cys799/Cys811, Cys819/Cys842, Cys836/Cys854, Cys840/Cys849, Cys858/Cys989, Cys880/Cys1024, Cys889/Cys986, Cys906/Cys913, Cys1034/Cys1077, Cys1048/Cys1072, Cys1059/Cys1099, Cys1079/Cys1087, Cys1089/Cys1114, Cys1105/Cys1134, Cys1118/Cys1160, Cys1142/Cys1184, Cys1164/Cys1178, Cys1186/Cys1210, Cys1205/Cys1235, and Cys1208/Cys1218. Asn837 carries N-linked (GlcNAc...) asparagine glycosylation. Positions 856–1025 (STCSIYGSGH…NSWKEASTCP (170 aa)) constitute a VWFD 3 domain. Asp870 contacts Ca(2+). N-linked (GlcNAc...) asparagine glycosylation occurs at Asn892. Asn991, Asp993, Asn998, and Asp999 together coordinate Ca(2+). Residues Asn1136 and Asn1151 are each glycosylated (N-linked (GlcNAc...) asparagine). 3 N-linked (GlcNAc...) asparagine glycosylation sites follow: Asn1212, Asn1227, and Asn1243. 4 O-linked (GalNAc) threonine glycosylation sites follow: Thr1264, Thr1267, Thr1268, and Thr1280. A glycan (O-linked (GalNAc) serine) is linked at Ser1286. Residue Thr1290 is glycosylated (O-linked (GalNAc) threonine). Ca(2+) contacts are provided by Asn1303, His1306, Ser1309, Gly1313, Asp1314, and Glu1316. The N-linked (GlcNAc...) asparagine glycan is linked to Asn1350. 2 residues coordinate Ca(2+): Asp1373 and Tyr1374. 11 consecutive repeat copies span residues 1392–1407 (SPTT…QPTS), 1408–1423 (SPTT…SSAT), 1424–1434 (SPTTSHITSTV), 1435–1445 (SPTTSPTTSTT), 1446–1456 (SPTTSPTTSTT), 1457–1467 (SPTTSTTSPTP), 1468–1478 (SPTTSTTSPTP), 1479–1489 (SPTTSTTSPTP), 1490–1500 (SPTTSTTSPTT), 1501–1511 (SPITSPTTSTT), and 1512–1513 (SP). Positions 1392 to 1513 (SPTTSTPISS…TSPTTSTTSP (122 aa)) are approximate repeats. Residues 1392 to 1513 (SPTTSTPISS…TSPTTSTTSP (122 aa)) are disordered.

Homomultimer; disulfide-linked. The N- and C-terminus mediate their assembly into higher order structures to form filaments. The CTCK domains of two polypeptides associate in the endoplasmic reticulum to generate intermolecularly disulfide-bonded dimers. These dimers progress to the Golgi apparatus, which is a more acidic environment than the endoplasmic reticulum. Under acidic conditions, the N-termini form non-covalent intermolecular interactions that juxtapose assemblies of the third VWD domain (VWD3) from different CTCK-linked dimers. The VWD3 assemblies then become disulfide bonded to one another to produce long, disulfide-linked polymers that remain highly compact until secretion. Interacts with FCGBP. Interacts with AGR2; disulfide-linked. Post-translationally, O-glycosylated. O-glycosylation is required for mucin assembly. Goblet cells synthesize two forms of mucin that differ in branched chain O-glycosylation and the site of production in the colon. May undergo proteolytic cleavage in the outer mucus layer of the colon, contributing to the expanded volume and loose nature of this layer which allows for bacterial colonization in contrast to the inner mucus layer which is dense and devoid of bacteria. In terms of processing, at low pH of 6 and under, undergoes autocatalytic cleavage in vitro in the N-terminal region of the fourth VWD domain. It is likely that this also occurs in vivo and is triggered by the low pH of the late secretory pathway. In terms of tissue distribution, expressed in intestine and airway.

It localises to the secreted. In terms of biological role, coats the epithelia of the intestines and other mucus membrane-containing organs to provide a protective, lubricating barrier against particles and infectious agents at mucosal surfaces. Major constituent of the colon mucus, which is mainly formed by large polymeric networks of MUC2 secreted by goblet cells that cover the exposed surfaces of intestine. MUC2 networks form hydrogels that guard the underlying epithelium from pathogens and other hazardous matter entering from the outside world, while permitting nutrient absorption and gas exchange. Acts as a divalent copper chaperone that protects intestinal cells from copper toxicity and facilitates nutritional copper unptake into cells. Binds both Cu(2+) and its reduced form, Cu(1+), at two juxtaposed binding sites: Cu(2+), once reduced to Cu(1+) by vitamin C (ascorbate) or other dietary antioxidants, transits to the other binding site. MUC2-bound Cu(1+) is protected from oxidation in aerobic environments, and can be released for nutritional delivery to cells. Mucin gels store antimicrobial molecules that participate in innate immunity. Mucin glycoproteins also house and feed the microbiome, lubricate tissue surfaces, and may facilitate the removal of contaminants and waste products from the body. Goblet cells synthesize two forms of MUC2 mucin that differ in branched chain O-glycosylation and the site of production in the colon: a (1) 'thick' mucus that wraps the microbiota to form fecal pellets is produced in the proximal, ascending colon. 'Thick' mucus transits along the descending colon and is lubricated by a (2) 'thin' MUC2 mucus produced in the distal colon which adheres to the 'thick' mucus. The protein is Mucin-2 of Rattus norvegicus (Rat).